Here is a 419-residue protein sequence, read N- to C-terminus: Serine hydroxymethyltransferase (419 aa).

(6S)-5,6,7,8-tetrahydrofolate-binding positions include L121 and G125–L127. An N6-(pyridoxal phosphate)lysine modification is found at K229.

This sequence belongs to the SHMT family. As to quaternary structure, homodimer. Pyridoxal 5'-phosphate serves as cofactor.

Its subcellular location is the cytoplasm. It catalyses the reaction (6R)-5,10-methylene-5,6,7,8-tetrahydrofolate + glycine + H2O = (6S)-5,6,7,8-tetrahydrofolate + L-serine. It functions in the pathway one-carbon metabolism; tetrahydrofolate interconversion. Its pathway is amino-acid biosynthesis; glycine biosynthesis; glycine from L-serine: step 1/1. In terms of biological role, catalyzes the reversible interconversion of serine and glycine with tetrahydrofolate (THF) serving as the one-carbon carrier. This reaction serves as the major source of one-carbon groups required for the biosynthesis of purines, thymidylate, methionine, and other important biomolecules. Also exhibits THF-independent aldolase activity toward beta-hydroxyamino acids, producing glycine and aldehydes, via a retro-aldol mechanism. In Histophilus somni (strain 2336) (Haemophilus somnus), this protein is Serine hydroxymethyltransferase.